The primary structure comprises 198 residues: Cytochrome c oxidase subunit 2 (198 aa).

Residues 1-13 (AICSLVLYLLTLM) form a helical membrane-spanning segment. Topologically, residues 14 to 26 (LMEKLSSNTVDAQ) are mitochondrial matrix. Residues 27–54 (EVELIWTILPAIVLILLALPSLQILYMM) traverse the membrane as a helical segment. The Mitochondrial intermembrane segment spans residues 55–198 (DEIDEPDLTL…WSSLLSTSSL (144 aa)). Positions 128, 163, 165, 167, 171, and 174 each coordinate Cu cation. Glutamate 165 contributes to the Mg(2+) binding site.

This sequence belongs to the cytochrome c oxidase subunit 2 family. As to quaternary structure, component of the cytochrome c oxidase (complex IV, CIV), a multisubunit enzyme composed of 14 subunits. The complex is composed of a catalytic core of 3 subunits MT-CO1, MT-CO2 and MT-CO3, encoded in the mitochondrial DNA, and 11 supernumerary subunits COX4I, COX5A, COX5B, COX6A, COX6B, COX6C, COX7A, COX7B, COX7C, COX8 and NDUFA4, which are encoded in the nuclear genome. The complex exists as a monomer or a dimer and forms supercomplexes (SCs) in the inner mitochondrial membrane with NADH-ubiquinone oxidoreductase (complex I, CI) and ubiquinol-cytochrome c oxidoreductase (cytochrome b-c1 complex, complex III, CIII), resulting in different assemblies (supercomplex SCI(1)III(2)IV(1) and megacomplex MCI(2)III(2)IV(2)). Found in a complex with TMEM177, COA6, COX18, COX20, SCO1 and SCO2. Interacts with TMEM177 in a COX20-dependent manner. Interacts with COX20. Interacts with COX16. Cu cation is required as a cofactor.

Its subcellular location is the mitochondrion inner membrane. It catalyses the reaction 4 Fe(II)-[cytochrome c] + O2 + 8 H(+)(in) = 4 Fe(III)-[cytochrome c] + 2 H2O + 4 H(+)(out). Component of the cytochrome c oxidase, the last enzyme in the mitochondrial electron transport chain which drives oxidative phosphorylation. The respiratory chain contains 3 multisubunit complexes succinate dehydrogenase (complex II, CII), ubiquinol-cytochrome c oxidoreductase (cytochrome b-c1 complex, complex III, CIII) and cytochrome c oxidase (complex IV, CIV), that cooperate to transfer electrons derived from NADH and succinate to molecular oxygen, creating an electrochemical gradient over the inner membrane that drives transmembrane transport and the ATP synthase. Cytochrome c oxidase is the component of the respiratory chain that catalyzes the reduction of oxygen to water. Electrons originating from reduced cytochrome c in the intermembrane space (IMS) are transferred via the dinuclear copper A center (CU(A)) of subunit 2 and heme A of subunit 1 to the active site in subunit 1, a binuclear center (BNC) formed by heme A3 and copper B (CU(B)). The BNC reduces molecular oxygen to 2 water molecules using 4 electrons from cytochrome c in the IMS and 4 protons from the mitochondrial matrix. The sequence is that of Cytochrome c oxidase subunit 2 (MT-CO2) from Tinamus major (Great tinamou).